Reading from the N-terminus, the 460-residue chain is tRNA modification GTPase MnmE (460 aa).

3 residues coordinate (6S)-5-formyl-5,6,7,8-tetrahydrofolate: R29, E91, and R131. Residues 226–383 enclose the TrmE-type G domain; that stretch reads GLRVALVGRP…LVQAVLERCG (158 aa). Residue N236 coordinates K(+). GTP contacts are provided by residues 236 to 241, 255 to 261, and 280 to 283; these read NVGKSS, TDLPGTT, and DTAG. S240 serves as a coordination point for Mg(2+). K(+)-binding residues include T255, L257, and T260. A Mg(2+)-binding site is contributed by T261. K460 contributes to the (6S)-5-formyl-5,6,7,8-tetrahydrofolate binding site.

This sequence belongs to the TRAFAC class TrmE-Era-EngA-EngB-Septin-like GTPase superfamily. TrmE GTPase family. As to quaternary structure, homodimer. Heterotetramer of two MnmE and two MnmG subunits. K(+) serves as cofactor.

The protein localises to the cytoplasm. Its function is as follows. Exhibits a very high intrinsic GTPase hydrolysis rate. Involved in the addition of a carboxymethylaminomethyl (cmnm) group at the wobble position (U34) of certain tRNAs, forming tRNA-cmnm(5)s(2)U34. The protein is tRNA modification GTPase MnmE of Synechococcus sp. (strain WH7803).